Consider the following 243-residue polypeptide: UPF0758 protein AM1_4368 (243 aa).

Residues 113–235 (VIDDPAVAAA…FTSLRQTTSL (123 aa)) enclose the MPN domain. Zn(2+)-binding residues include His184, His186, and Asp197. A JAMM motif motif is present at residues 184–197 (HNHPSGQTDPSPED).

The protein belongs to the UPF0758 family.

The chain is UPF0758 protein AM1_4368 from Acaryochloris marina (strain MBIC 11017).